The following is a 359-amino-acid chain: 3-dehydroquinate synthase (359 aa).

NAD(+) is bound by residues 71–76 (DGEAYK), 105–109 (GVIGD), 129–130 (TT), K142, and K151. Zn(2+)-binding residues include E184, H247, and H264.

This sequence belongs to the sugar phosphate cyclases superfamily. Dehydroquinate synthase family. Co(2+) is required as a cofactor. It depends on Zn(2+) as a cofactor. Requires NAD(+) as cofactor.

It is found in the cytoplasm. It carries out the reaction 7-phospho-2-dehydro-3-deoxy-D-arabino-heptonate = 3-dehydroquinate + phosphate. Its pathway is metabolic intermediate biosynthesis; chorismate biosynthesis; chorismate from D-erythrose 4-phosphate and phosphoenolpyruvate: step 2/7. Catalyzes the conversion of 3-deoxy-D-arabino-heptulosonate 7-phosphate (DAHP) to dehydroquinate (DHQ). This is 3-dehydroquinate synthase from Burkholderia ambifaria (strain MC40-6).